The following is a 309-amino-acid chain: Small ribosomal subunit protein mS23 (309 aa).

This sequence belongs to the mitochondrion-specific ribosomal protein mS23 family. Component of the mitochondrial small ribosomal subunit.

Its subcellular location is the mitochondrion. The chain is Small ribosomal subunit protein mS23 (RSM25) from Lodderomyces elongisporus (strain ATCC 11503 / CBS 2605 / JCM 1781 / NBRC 1676 / NRRL YB-4239) (Yeast).